The chain runs to 423 residues: UDP-N-acetylglucosamine 1-carboxyvinyltransferase (423 aa).

A phosphoenolpyruvate-binding site is contributed by 22–23; the sequence is KN. Arginine 93 provides a ligand contact to UDP-N-acetyl-alpha-D-glucosamine. Cysteine 117 acts as the Proton donor in catalysis. Position 117 is a 2-(S-cysteinyl)pyruvic acid O-phosphothioketal (cysteine 117). UDP-N-acetyl-alpha-D-glucosamine-binding positions include 122 to 126, aspartate 307, and valine 329; that span reads RPIDL.

The protein belongs to the EPSP synthase family. MurA subfamily.

It is found in the cytoplasm. It carries out the reaction phosphoenolpyruvate + UDP-N-acetyl-alpha-D-glucosamine = UDP-N-acetyl-3-O-(1-carboxyvinyl)-alpha-D-glucosamine + phosphate. It functions in the pathway cell wall biogenesis; peptidoglycan biosynthesis. Its function is as follows. Cell wall formation. Adds enolpyruvyl to UDP-N-acetylglucosamine. The chain is UDP-N-acetylglucosamine 1-carboxyvinyltransferase from Chlorobium chlorochromatii (strain CaD3).